The sequence spans 318 residues: Taste receptor type 2 member 7 (318 aa).

The Extracellular portion of the chain corresponds to Met1–Leu9. The chain crosses the membrane as a helical span at residues Leu10–Val30. Residues Asn31–Arg55 are Cytoplasmic-facing. The chain crosses the membrane as a helical span at residues Ile56–Tyr76. The Extracellular segment spans residues Ala77–His94. The helical transmembrane segment at Leu95 to Phe115 threads the bilayer. Residues His116–Arg128 are Cytoplasmic-facing. A helical transmembrane segment spans residues Val129–Thr149. Over Glu150–Asn187 the chain is Extracellular. 2 N-linked (GlcNAc...) asparagine glycosylation sites follow: Asn167 and Asn175. A helical transmembrane segment spans residues Leu188–Leu208. The Cytoplasmic segment spans residues Arg209–Lys235. Residues Ala236–Ser256 traverse the membrane as a helical segment. Topologically, residues Ser257–Ala266 are extracellular. The helical transmembrane segment at Val267–Leu287 threads the bilayer. The Cytoplasmic segment spans residues Gly288 to Ile318.

Belongs to the G-protein coupled receptor T2R family.

The protein localises to the membrane. Its function is as follows. Gustducin-coupled receptor implicated in the perception of bitter compounds in the oral cavity and the gastrointestinal tract. Signals through PLCB2 and the calcium-regulated cation channel TRPM5. This is Taste receptor type 2 member 7 (TAS2R7) from Pongo pygmaeus (Bornean orangutan).